Here is a 416-residue protein sequence, read N- to C-terminus: Signal recognition particle receptor FtsY (416 aa).

Over residues 1–10 (MFSFFRRKKK) the composition is skewed to basic residues. Positions 1 to 24 (MFSFFRRKKKQETPALEEAQVQET) are disordered. Residues 224-231 (GINGAGKT), 304-308 (DTAGR), and 368-371 (TKLD) contribute to the GTP site.

This sequence belongs to the GTP-binding SRP family. FtsY subfamily. Part of the signal recognition particle protein translocation system, which is composed of SRP and FtsY. SRP is a ribonucleoprotein composed of Ffh and a 4.5S RNA molecule. Mg(2+) serves as cofactor.

Its subcellular location is the cell membrane. The protein resides in the cytoplasm. It catalyses the reaction GTP + H2O = GDP + phosphate + H(+). Its function is as follows. Involved in targeting and insertion of nascent membrane proteins into the cytoplasmic membrane. Acts as a receptor for the complex formed by the signal recognition particle (SRP) and the ribosome-nascent chain (RNC). Interaction with SRP-RNC leads to the transfer of the RNC complex to the Sec translocase for insertion into the membrane, the hydrolysis of GTP by both Ffh and FtsY, and the dissociation of the SRP-FtsY complex into the individual components. This is Signal recognition particle receptor FtsY from Neisseria gonorrhoeae.